A 711-amino-acid chain; its full sequence is MARSRSRSPRWKHRSLSPVPRNAEHYKQRHSHGHYGCEYRKDPKRPVAWRMDSEKHGQSKPRIPSRGNIYYQSYEHRSPSPNIRNSLENVYMYKPHRGYSPGRGDSNRRAQYMPKYSEGIPYKEHERNSYPQKVQGGHSPDDHRVRGSGKGGKPPQRSIADSFRFEGKWHEDELRHQRIQEEKYSQSTRRGSEDFETRSSFQKRYPEDRDFRKYGHTSKRPKDVERYESREPARNPKWKPEHSLPPYQEDTDQWNLGPQTYRHAEREHPETSSATKVSYDYRHKRPKLLDGDQDFSDGRTQKYCKEEDRKYSFQKGPLNRELDCFNTGRGRETQDGQVKEPFKPSKKDSIACTYSNKNDVDLRSSNDKWKEKIKKEGDCRKESNSSSNQLDKSQKLPDVKPSPINLRKKSLTVKVDVKKTVDTFRVASSYSTERQMSHDLVAVGRKSENFHPVFEHLDSTQNTENKPTGEFAQEIITIIHQVKANYFPSPGITLHERFSTMQDIHKADVNEIPLNSDPEIHRRIDMSLAELQSKQAVIYESEQTLIKIIDPNDLRHDIERRRKERLQNEDEHIFHIASAAERDDQNSSFSKVKNVHTDGFQKPTHFIKSNFRKCIEKPYMNYTTQRKDIITHKPFEVEGNHRNTRVRPFKSNFRGGRCQPNYKSGLVQKSLYIQAKYQRLRFTGPRGFITHKFRERLMRKKKEYTDVATGI.

A compositionally biased stretch (basic residues) spans 1–15 (MARSRSRSPRWKHRS). Disordered stretches follow at residues 1–42 (MARS…YRKD) and 48–67 (AWRM…PSRG). 2 positions are modified to phosphoserine: serine 15 and serine 17. Positions 48–57 (AWRMDSEKHG) are enriched in basic and acidic residues. A phosphoserine mark is found at serine 78, serine 80, and serine 187. 2 disordered regions span residues 94–350 (KPHR…KDSI) and 371–404 (EKIK…PSPI). Basic and acidic residues-rich tracts occupy residues 163–197 (FRFE…DFET), 204–213 (RYPEDRDFRK), 220–242 (RPKD…KPEH), 296–311 (SDGR…DRKY), 318–349 (LNRE…KKDS), and 371–383 (EKIK…RKES). A Glycyl lysine isopeptide (Lys-Gly) (interchain with G-Cter in SUMO2) cross-link involves residue lysine 400. 2 positions are modified to phosphoserine: serine 402 and serine 578.

This sequence belongs to the BCLAF1/THRAP3 family.

It is found in the mitochondrion. The protein is BCLAF1 and THRAP3 family member 3 of Homo sapiens (Human).